Reading from the N-terminus, the 445-residue chain is Protein cereblon (445 aa).

The disordered stretch occupies residues 1–50 (MAAEEGGDGRRNMGNPPPPAPAESEEEDDNEMEVEDQDGKEAEKPNMINF). The span at 23-36 (ESEEEDDNEMEVED) shows a compositional bias: acidic residues. One can recognise a Lon N-terminal domain in the interval 82–321 (IPVLPHVMVM…CELDIMNKCT (240 aa)). In terms of domain architecture, CULT spans 320 to 428 (CTSLCCKQCQ…LTRSALLPRI (109 aa)). The Zn(2+) site is built by cysteine 325 and cysteine 328. (S)-thalidomide is bound by residues histidine 380, tryptophan 382, and tryptophan 388. The Zn(2+) site is built by cysteine 393 and cysteine 396.

It belongs to the CRBN family. As to quaternary structure, component of a DCX (DDB1-CUL4-X-box) protein ligase complex. Interacts directly with DDB1.

The protein resides in the cytoplasm. The protein localises to the nucleus. Its pathway is protein modification; protein ubiquitination. Its function is as follows. Substrate recognition component of a DCX (DDB1-CUL4-X-box) E3 protein ligase complex that mediates the ubiquitination and subsequent proteasomal degradation of target proteins, such as MEIS2. Normal degradation of key regulatory proteins is required for normal limb outgrowth and expression of the fibroblast growth factor FGF8. Maintains presynaptic glutamate release and consequently cognitive functions, such as memory and learning, by negatively regulating large-conductance calcium-activated potassium (BK) channels in excitatory neurons. Likely to function by regulating the assembly and neuronal surface expression of BK channels via its interaction with KCNT1. May also be involved in regulating anxiety-like behaviors via a BK channel-independent mechanism. This chain is Protein cereblon (CRBN), found in Gallus gallus (Chicken).